Reading from the N-terminus, the 275-residue chain is uncharacterized protein (275 aa).

The 98-residue stretch at lysine 171–isoleucine 268 folds into the HTH araC/xylS-type domain. 2 consecutive DNA-binding regions (H-T-H motif) follow at residues asparagine 188–lysine 209 and proline 235–valine 258.

This is an uncharacterized protein from Bacillus subtilis (strain 168).